The chain runs to 443 residues: F-box only protein 39 (443 aa).

The region spanning 16–61 is the F-box domain; the sequence is WATLPDVCLRRVFWWLGDRDRSRAALVCRKWNQMMYSADLWRYRTI.

Directly interacts with SKP1 and CUL1.

Substrate-recognition component of the SCF (SKP1-CUL1-F-box protein)-type E3 ubiquitin ligase complex. In Bos taurus (Bovine), this protein is F-box only protein 39 (FBXO39).